A 357-amino-acid polypeptide reads, in one-letter code: Protein RecA (357 aa).

74 to 81 (GPESSGKT) contributes to the ATP binding site.

The protein belongs to the RecA family.

It localises to the cytoplasm. In terms of biological role, can catalyze the hydrolysis of ATP in the presence of single-stranded DNA, the ATP-dependent uptake of single-stranded DNA by duplex DNA, and the ATP-dependent hybridization of homologous single-stranded DNAs. It interacts with LexA causing its activation and leading to its autocatalytic cleavage. This chain is Protein RecA, found in Bordetella petrii (strain ATCC BAA-461 / DSM 12804 / CCUG 43448).